Here is a 38-residue protein sequence, read N- to C-terminus: Large ribosomal subunit protein bL36A (38 aa).

Belongs to the bacterial ribosomal protein bL36 family.

This is Large ribosomal subunit protein bL36A from Prochlorococcus marinus (strain MIT 9515).